A 233-amino-acid chain; its full sequence is Uridylate kinase (233 aa).

Residue 7 to 10 (KISG) participates in ATP binding. Residue G49 coordinates UMP. ATP-binding residues include G50 and R54. Residues D68 and 129-136 (TGNPFFTT) contribute to the UMP site. Positions 156, 162, and 165 each coordinate ATP.

It belongs to the UMP kinase family. In terms of assembly, homohexamer.

It is found in the cytoplasm. The enzyme catalyses UMP + ATP = UDP + ADP. It participates in pyrimidine metabolism; CTP biosynthesis via de novo pathway; UDP from UMP (UMPK route): step 1/1. Its activity is regulated as follows. Inhibited by UTP. In terms of biological role, catalyzes the reversible phosphorylation of UMP to UDP. In Neorickettsia sennetsu (strain ATCC VR-367 / Miyayama) (Ehrlichia sennetsu), this protein is Uridylate kinase.